The primary structure comprises 1337 residues: MLDVNEFDKLRIGLATADDIRNWSYGEVKKPETINYRTLKPEKDGLFGEQIFGPTRDWECACGKYKRVRFKGIVCERCGVEVTKSRVRRERMGHIELAAPVTHIWFFKGVPSRLGYLLDIAPKDLEKVIYFAAYMVTKVDEEQRHQDLPDLQQEFDNEIANLEKRRNAEIEERAKKVEADLAELEAEGEAKGSARAKLRNSAEREMAAIRTRYDEQIQRLSAVFDRFKTLKPGDMEGDVDLWREMEDRYGDYFEGCMGAEAIKKRLQDFDLEAASKQLREEIDTGTGQRKARALKRLKVVNAFLTTGNKPEAMVLDVIPVIPPDLRPMVQLDGGRFATSDLNDLYRRVINRNNRLKRLIELGAPEIMLNNEKRMLQEAVDSLFDNGRRGRPVTGASNRPLKSLSDMLKGKQGRFRQNLLGKRVDYSGRSVIVVGPSLRMHQCGLPKPMALELFKPFVIKRLVDQGFAQNMKSAKRLVDRADSEVWGVLEEVISEHPVLLNRAPTLHRLGIQAFEPILVEGKAIHLPPLACAAFNADFDGDQMAVHLPLSAEAQAEARSLMMASDNILKPADGHTVTMPSQDMILGLYYLTTVIDGAKGQGRVFSSLEEAEMALDKHEIDMQAKVLIRLPQDFVLPKDWEPGEVKVVDPEPGSPDVVKEERFHDGSVLFATSYGRILFNGTLPVDYPFVNEQAPKKRLSKIVDDIATRYSTAQVAATLDALKDLGFTRAPWSGVSFAFSDVIQPPELDEYIEKYEGEADKVNENYEIGMLTEEERRQELVDLWTKCTSEVSEAVEEHFDSKNNLAIIVQSGARGNMMQINQIAGMRGLVANPKGEIIPRPVKSNYRKGLSVLEYFISQHGARKGLADTALRTAESGYLTRRLVDVSQDVIVREEDCGTKRGLTMKVGERDAEGNLHLVKAADGGPYSRLLAADVIDPADGETVLYKAGDALSMDVLNDLVAHGVEEVKARSVLTCESKRGVCAKCYGWSLATNKLVDVGEAVGIVAAQSIGEPGTQLTLRSFHSGGVASASDITQGLPRVTELFEARTPKGEAPIAEFAGVVKVEDTERGRQVTLKPDDDSVEPIVYPVTRRAPMLVKDGDHVEAGTQLIEGSVDPKKILRILGPRAAQVNIVEEVHTVYRSQGVDIHDKHIEVIVHQMLRRITVIDSGDTDLLPGELVDKARFKAANMEAVKNGGKPAAGRPELMGITKASLATDSWLSAASFQETTRVLTEAALNQKVDDLKGLKENVIIGKLIPAGTGLARYRNATVEPDKAIRDTIYPNFGLGGEGTDSSFGDTDLSDVDFSNIDFGDLKLGDDFNPDDFLDDNGGQTDLGDTL.

Residues Cys60, Cys62, Cys75, and Cys78 each contribute to the Zn(2+) site. Residues Asp536, Asp538, and Asp540 each coordinate Mg(2+). Residues Cys895, Cys974, Cys981, and Cys984 each coordinate Zn(2+).

The protein belongs to the RNA polymerase beta' chain family. As to quaternary structure, the RNAP catalytic core consists of 2 alpha, 1 beta, 1 beta' and 1 omega subunit. When a sigma factor is associated with the core the holoenzyme is formed, which can initiate transcription. The cofactor is Mg(2+). Zn(2+) is required as a cofactor.

It carries out the reaction RNA(n) + a ribonucleoside 5'-triphosphate = RNA(n+1) + diphosphate. Its function is as follows. DNA-dependent RNA polymerase catalyzes the transcription of DNA into RNA using the four ribonucleoside triphosphates as substrates. In Bifidobacterium adolescentis (strain ATCC 15703 / DSM 20083 / NCTC 11814 / E194a), this protein is DNA-directed RNA polymerase subunit beta'.